A 314-amino-acid polypeptide reads, in one-letter code: Thymidylate synthase (314 aa).

DUMP-binding positions include arginine 21 and 176–177; that span reads RR. Catalysis depends on cysteine 196, which acts as the Nucleophile. Residues 216-219, asparagine 227, and 257-259 contribute to the dUMP site; these read RSAD and HLY. Aspartate 219 contacts (6R)-5,10-methylene-5,6,7,8-tetrahydrofolate. Position 313 (serine 313) interacts with (6R)-5,10-methylene-5,6,7,8-tetrahydrofolate.

Belongs to the thymidylate synthase family. Bacterial-type ThyA subfamily. Homodimer.

The protein resides in the cytoplasm. It carries out the reaction dUMP + (6R)-5,10-methylene-5,6,7,8-tetrahydrofolate = 7,8-dihydrofolate + dTMP. It functions in the pathway pyrimidine metabolism; dTTP biosynthesis. Functionally, catalyzes the reductive methylation of 2'-deoxyuridine-5'-monophosphate (dUMP) to 2'-deoxythymidine-5'-monophosphate (dTMP) while utilizing 5,10-methylenetetrahydrofolate (mTHF) as the methyl donor and reductant in the reaction, yielding dihydrofolate (DHF) as a by-product. This enzymatic reaction provides an intracellular de novo source of dTMP, an essential precursor for DNA biosynthesis. The chain is Thymidylate synthase from Listeria innocua serovar 6a (strain ATCC BAA-680 / CLIP 11262).